The sequence spans 432 residues: Glutamate-1-semialdehyde 2,1-aminomutase (432 aa).

Lysine 271 is subject to N6-(pyridoxal phosphate)lysine.

This sequence belongs to the class-III pyridoxal-phosphate-dependent aminotransferase family. HemL subfamily. In terms of assembly, homodimer. Pyridoxal 5'-phosphate is required as a cofactor.

It is found in the cytoplasm. The enzyme catalyses (S)-4-amino-5-oxopentanoate = 5-aminolevulinate. It functions in the pathway porphyrin-containing compound metabolism; protoporphyrin-IX biosynthesis; 5-aminolevulinate from L-glutamyl-tRNA(Glu): step 2/2. This is Glutamate-1-semialdehyde 2,1-aminomutase from Protochlamydia amoebophila (strain UWE25).